The sequence spans 1364 residues: Formin-like protein 6 (1364 aa).

A Phosphatase tensin-type domain is found at 9 to 193 (YRKPPDGLLE…HYISRRNVSA (185 aa)). Cys-126 serves as the catalytic Phosphocysteine intermediate. In terms of domain architecture, C2 tensin-type spans 199–338 (DRALTLDCVI…FRAEVLFSEM (140 aa)). Disordered stretches follow at residues 614–934 (KCTP…NLKP), 976–999 (VLPS…KPEK), and 1317–1364 (EAEA…ASAK). Residues 617-631 (PSPPPLLPPLAPVVP) are compositionally biased toward pro residues. The span at 657-690 (SFPSLSPTQQKQSTSKLCQTILPTNHQLSSSNIT) shows a compositional bias: polar residues. Positions 734–743 (PPAPPPPPLQ) are enriched in pro residues. The span at 744-757 (SPSTPRCSPVRTLA) shows a compositional bias: low complexity. Pro residues-rich tracts occupy residues 774–813 (GPPP…PAAP) and 856–865 (PSPPPPPPPC). A compositionally biased stretch (polar residues) spans 916–929 (MSRSLQSGQAASRR). The FH2 domain maps to 922 to 1322 (SGQAASRRSN…KALKEAEAEK (401 aa)). Residues 1317-1351 (EAEAEKTKKEPENAQKTKEPGNDKAKHNNSIKELD) show a composition bias toward basic and acidic residues. A compositionally biased stretch (polar residues) spans 1353-1364 (SLQSPAQTASAK).

This sequence belongs to the formin-like family. Class-II subfamily.

The sequence is that of Formin-like protein 6 (FH6) from Oryza sativa subsp. japonica (Rice).